Consider the following 154-residue polypeptide: Small heat shock protein IbpB (154 aa).

The 112-residue stretch at 26–137 folds into the sHSP domain; that stretch reads GQEPQGFPPY…QPQRIAIGSA (112 aa).

It belongs to the small heat shock protein (HSP20) family. In terms of assembly, homodimer. Forms homomultimers of about 100-150 subunits at optimal growth temperatures. Conformation changes to oligomers at high temperatures or high ionic concentrations. The decrease in size of the multimers is accompanied by an increase in chaperone activity.

Its subcellular location is the cytoplasm. Functionally, associates with aggregated proteins, together with IbpA, to stabilize and protect them from irreversible denaturation and extensive proteolysis during heat shock and oxidative stress. Aggregated proteins bound to the IbpAB complex are more efficiently refolded and reactivated by the ATP-dependent chaperone systems ClpB and DnaK/DnaJ/GrpE. Its activity is ATP-independent. The chain is Small heat shock protein IbpB from Yersinia pseudotuberculosis serotype O:1b (strain IP 31758).